Here is a 353-residue protein sequence, read N- to C-terminus: Mitochondrial ubiquitin ligase activator of nfkb 1 (353 aa).

The Cytoplasmic segment spans residues 1-8 (MENGGRPS). Residues 9 to 29 (VGQVILLTTSSAITALFYSIY) form a helical membrane-spanning segment. The Mitochondrial intermembrane segment spans residues 30–239 (RHKYRSVQTL…LLEKQEVQMR (210 aa)). Residues 240-260 (WWRILSIVFGVASCITLFFIL) traverse the membrane as a helical segment. Over 261-353 (RRKYRHYKEK…IDRIVPLYNS (93 aa)) the chain is Cytoplasmic. The RING-type zinc-finger motif lies at 303 to 341 (CSICLSTEKSCVFLECGHVCSCISCYQALPSPKKCPICR).

Homooligomer.

The protein localises to the mitochondrion outer membrane. It catalyses the reaction S-ubiquitinyl-[E2 ubiquitin-conjugating enzyme]-L-cysteine + [acceptor protein]-L-lysine = [E2 ubiquitin-conjugating enzyme]-L-cysteine + N(6)-ubiquitinyl-[acceptor protein]-L-lysine.. Its pathway is protein modification; protein ubiquitination. E3 ubiquitin-protein ligase that plays a role in the control of mitochondrial morphology. Promotes mitochondrial fragmentation and influences mitochondrial localization. Inhibits cell growth. E3 ubiquitin ligases accept ubiquitin from an E2 ubiquitin-conjugating enzyme in the form of a thioester and then directly transfer the ubiquitin to targeted substrates. The protein is Mitochondrial ubiquitin ligase activator of nfkb 1 (mul1) of Xenopus laevis (African clawed frog).